A 185-amino-acid polypeptide reads, in one-letter code: Ribosome-recycling factor (185 aa).

Belongs to the RRF family.

It is found in the cytoplasm. Responsible for the release of ribosomes from messenger RNA at the termination of protein biosynthesis. May increase the efficiency of translation by recycling ribosomes from one round of translation to another. In Bacillus anthracis (strain CDC 684 / NRRL 3495), this protein is Ribosome-recycling factor.